The sequence spans 249 residues: Eukaryotic translation initiation factor 3 subunit K (249 aa).

The PCI domain occupies 46–222; that stretch reads FDCYANLALL…VKVPSNKENE (177 aa).

This sequence belongs to the eIF-3 subunit K family. In terms of assembly, component of the eukaryotic translation initiation factor 3 (eIF-3) complex.

Its subcellular location is the cytoplasm. Its function is as follows. Component of the eukaryotic translation initiation factor 3 (eIF-3) complex, which is involved in protein synthesis of a specialized repertoire of mRNAs and, together with other initiation factors, stimulates binding of mRNA and methionyl-tRNAi to the 40S ribosome. The eIF-3 complex specifically targets and initiates translation of a subset of mRNAs involved in cell proliferation. In Aspergillus clavatus (strain ATCC 1007 / CBS 513.65 / DSM 816 / NCTC 3887 / NRRL 1 / QM 1276 / 107), this protein is Eukaryotic translation initiation factor 3 subunit K.